Consider the following 464-residue polypeptide: tRNA(Ile)-lysidine synthase (464 aa).

Residue 30 to 35 (SGGVDS) participates in ATP binding.

This sequence belongs to the tRNA(Ile)-lysidine synthase family.

It localises to the cytoplasm. The catalysed reaction is cytidine(34) in tRNA(Ile2) + L-lysine + ATP = lysidine(34) in tRNA(Ile2) + AMP + diphosphate + H(+). Ligates lysine onto the cytidine present at position 34 of the AUA codon-specific tRNA(Ile) that contains the anticodon CAU, in an ATP-dependent manner. Cytidine is converted to lysidine, thus changing the amino acid specificity of the tRNA from methionine to isoleucine. This chain is tRNA(Ile)-lysidine synthase, found in Shewanella oneidensis (strain ATCC 700550 / JCM 31522 / CIP 106686 / LMG 19005 / NCIMB 14063 / MR-1).